Reading from the N-terminus, the 135-residue chain is Histone H2A (135 aa).

The disordered stretch occupies residues 1–24; sequence MTGGGKSGGKASSGKNAQSRSSKA. An N6-acetyllysine mark is found at Lys6 and Lys10. N5-methylglutamine is present on Gln107. Ser132 is modified (phosphoserine). The short motif at 132–133 is the [ST]-Q motif element; sequence SQ.

It belongs to the histone H2A family. In terms of assembly, the nucleosome is a histone octamer containing two molecules each of H2A, H2B, H3 and H4 assembled in one H3-H4 heterotetramer and two H2A-H2B heterodimers. The octamer wraps approximately 147 bp of DNA. Post-translationally, phosphorylated to form H2AS128ph (gamma-H2A) in response to DNA double-strand breaks (DSBs) generated by exogenous genotoxic agents and by stalled replication forks. Phosphorylation is dependent on the DNA damage checkpoint kinases MEC1/ATR and TEL1/ATM, spreads on either side of a detected DSB site and may mark the surrounding chromatin for recruitment of proteins required for DNA damage signaling and repair. Gamma-H2A is removed from the DNA prior to the strand invasion-primer extension step of the repair process and subsequently dephosphorylated. Dephosphorylation is necessary for efficient recovery from the DNA damage checkpoint. Acetylated by ESA1 to form H2AK4ac and H2AK7ac.

The protein resides in the nucleus. It localises to the chromosome. Its function is as follows. Core component of nucleosome which plays a central role in DNA double strand break (DSB) repair. Nucleosomes wrap and compact DNA into chromatin, limiting DNA accessibility to the cellular machineries which require DNA as a template. Histones thereby play a central role in transcription regulation, DNA repair, DNA replication and chromosomal stability. DNA accessibility is regulated via a complex set of post-translational modifications of histones, also called histone code, and nucleosome remodeling. The chain is Histone H2A (HTA1) from Podospora anserina (Pleurage anserina).